A 376-amino-acid polypeptide reads, in one-letter code: Glutamate 5-kinase (376 aa).

Lys-23 is an ATP binding site. Substrate is bound by residues Ser-63, Asp-150, and Asn-162. Residues 182–183 (SD) and 222–228 (TGGMASK) each bind ATP. The region spanning 284 to 358 (GGALRIDAGA…GKQTAQLPEG (75 aa)) is the PUA domain.

This sequence belongs to the glutamate 5-kinase family.

It is found in the cytoplasm. The catalysed reaction is L-glutamate + ATP = L-glutamyl 5-phosphate + ADP. The protein operates within amino-acid biosynthesis; L-proline biosynthesis; L-glutamate 5-semialdehyde from L-glutamate: step 1/2. Functionally, catalyzes the transfer of a phosphate group to glutamate to form L-glutamate 5-phosphate. This Corynebacterium diphtheriae (strain ATCC 700971 / NCTC 13129 / Biotype gravis) protein is Glutamate 5-kinase.